The following is a 457-amino-acid chain: Argininosuccinate lyase (457 aa).

The protein belongs to the lyase 1 family. Argininosuccinate lyase subfamily.

It localises to the cytoplasm. It catalyses the reaction 2-(N(omega)-L-arginino)succinate = fumarate + L-arginine. It participates in amino-acid biosynthesis; L-arginine biosynthesis; L-arginine from L-ornithine and carbamoyl phosphate: step 3/3. This is Argininosuccinate lyase from Escherichia fergusonii (strain ATCC 35469 / DSM 13698 / CCUG 18766 / IAM 14443 / JCM 21226 / LMG 7866 / NBRC 102419 / NCTC 12128 / CDC 0568-73).